Reading from the N-terminus, the 131-residue chain is Protein NEGATIVE REGULATOR OF RESISTANCE (131 aa).

Disordered stretches follow at residues M1 to S33 and T51 to A131. A Nuclear localization signal motif is present at residues K12–R15. Low complexity predominate over residues P116–A131.

This sequence belongs to the NPR1-interactor family. As to quaternary structure, interacts with NPR1/NH1. Interacts with NPR2/NH2.

It is found in the nucleus. Functionally, acts as a negative regulator of disease resistance. Acts on basal resistance, age-related resistance and resistance mediated by the LRR receptor kinase XA21. Plants over-expressing NRR display enhanced susceptibility to the bacterial blight Xanthomonas oryzae pv. oryzae (Xoo). This Oryza sativa subsp. indica (Rice) protein is Protein NEGATIVE REGULATOR OF RESISTANCE.